Consider the following 264-residue polypeptide: Protein-lysine methyltransferase METTL21C (264 aa).

Residues 1-10 show a composition bias toward polar residues; the sequence is MDVCLSSAQQ. The tract at residues 1 to 46 is disordered; that stretch reads MDVCLSSAQQPGRRGEGLSSPGGWLEAEKKGAPQKDSTGGVLEESN. Residues Trp-92, 120–122, Asp-141, Trp-172, and Ser-193 each bind S-adenosyl-L-methionine; that span reads GAG.

This sequence belongs to the methyltransferase superfamily. METTL21 family. As to quaternary structure, interacts with members of the heat shock protein 70 families; these proteins may possibly be methylation substrates for the enzyme.

Its subcellular location is the nucleus. It is found in the cytoplasm. The catalysed reaction is L-lysyl-[protein] + S-adenosyl-L-methionine = N(6)-methyl-L-lysyl-[protein] + S-adenosyl-L-homocysteine + H(+). It carries out the reaction N(6)-methyl-L-lysyl-[protein] + S-adenosyl-L-methionine = N(6),N(6)-dimethyl-L-lysyl-[protein] + S-adenosyl-L-homocysteine + H(+). The enzyme catalyses N(6),N(6)-dimethyl-L-lysyl-[protein] + S-adenosyl-L-methionine = N(6),N(6),N(6)-trimethyl-L-lysyl-[protein] + S-adenosyl-L-homocysteine + H(+). Protein-lysine N-methyltransferase using S-adenosyl-L-methionine as methyl donor. Mono-di and trimethylates 'Lys-943' of AARS1. The protein is Protein-lysine methyltransferase METTL21C of Homo sapiens (Human).